A 770-amino-acid chain; its full sequence is Protein PAT1 homolog 1 (770 aa).

A disordered region spans residues 1-26; sequence MFRYESLEDCPLDEDEDAFQGLGEED. Residues 1–84 are region A; interaction with DDX6/RCK; sequence MFRYESLEDC…EMDLLGDHEE (84 aa). The segment at 1–397 is involved in nuclear foci localization; sequence MFRYESLEDC…HRSSHQDHLR (397 aa). A compositionally biased stretch (acidic residues) spans 7 to 26; that stretch reads LEDCPLDEDEDAFQGLGEED. The tract at residues 85–388 is region N; interaction with decapping machinery; sequence NLAERLSKMV…LNGAGDRGSH (304 aa). A Nuclear export signal motif is present at residues 86–95; that stretch reads LAERLSKMVI. S177 carries the post-translational modification Phosphoserine. T178 is modified (phosphothreonine). S179 and S184 each carry phosphoserine. At T194 the chain carries Phosphothreonine. 3 positions are modified to asymmetric dimethylarginine: R217, R223, and R263. The involved in RNA-binding stretch occupies residues 223–397; that stretch reads RYPAPYGERM…HRSSHQDHLR (175 aa). S278 is subject to Phosphoserine. Residue R284 is modified to Asymmetric dimethylarginine. Disordered stretches follow at residues 315 to 344 and 360 to 400; these read FRAFFSAPPSATPPPQQHPPGPGPHLQNLR and QHRR…RKDP. Positions 324–337 are enriched in pro residues; it reads SATPPPQQHPPGPG. Low complexity predominate over residues 367-380; it reads QRQQQNRNQHRNLN. Residue R385 is modified to Omega-N-methylarginine. A compositionally biased stretch (basic and acidic residues) spans 385-400; sequence RGSHRSSHQDHLRKDP. The segment at 389–448 is region H; that stretch reads RSSHQDHLRKDPYANLMLQREKDWVSKIQMMQLQSTDPYLDDFYYQNYFEKLEKLSAAEE. The interval 398–770 is involved in nuclear speckle localization; the sequence is KDPYANLMLQ…TKLQLVQGIR (373 aa). The tract at residues 449–770 is region C; it reads IQGDGPKKER…TKLQLVQGIR (322 aa).

It belongs to the PAT1 family. As to quaternary structure, interacts (via region A) with DDX6/RCK. Interacts (via region H and region C) with LSM1 and LSM4. Interacts (via region N) with DCP1A, DCP2, EDC3, EDC4 and XRN1. Interacts with the CCR4-NOT complex. Interacts with the Lsm-containing SMN-Sm protein complex. Interacts with EIF4ENIF1/4E-T.

The protein resides in the cytoplasm. Its subcellular location is the P-body. It localises to the nucleus. The protein localises to the PML body. It is found in the nucleus speckle. Functionally, RNA-binding protein involved in deadenylation-dependent decapping of mRNAs, leading to the degradation of mRNAs. Acts as a scaffold protein that connects deadenylation and decapping machinery. Required for cytoplasmic mRNA processing body (P-body) assembly. The protein is Protein PAT1 homolog 1 (PATL1) of Pongo abelii (Sumatran orangutan).